The chain runs to 326 residues: tRNA uridine(34) hydroxylase (326 aa).

In terms of domain architecture, Rhodanese spans 123-217 (ADPEVFVVDT…YLEEVPEEES (95 aa)). Residue cysteine 177 is the Cysteine persulfide intermediate of the active site. The interval 293-326 (AVRGEQHVGGESAKQRQQRRAEKLAKKDVQRKQA) is disordered. A compositionally biased stretch (basic and acidic residues) spans 311-326 (RRAEKLAKKDVQRKQA).

This sequence belongs to the TrhO family.

It carries out the reaction uridine(34) in tRNA + AH2 + O2 = 5-hydroxyuridine(34) in tRNA + A + H2O. In terms of biological role, catalyzes oxygen-dependent 5-hydroxyuridine (ho5U) modification at position 34 in tRNAs. The protein is tRNA uridine(34) hydroxylase of Vibrio campbellii (strain ATCC BAA-1116).